We begin with the raw amino-acid sequence, 161 residues long: Large ribosomal subunit protein bL17 (161 aa).

The tract at residues 126 to 161 (KVAKKATRTRRSKKTTEAAPAAEVPATEEPKAESAE) is disordered. A compositionally biased stretch (basic residues) spans 129–138 (KKATRTRRSK). The segment covering 142-152 (EAAPAAEVPAT) has biased composition (low complexity).

Belongs to the bacterial ribosomal protein bL17 family. In terms of assembly, part of the 50S ribosomal subunit. Contacts protein L32.

The polypeptide is Large ribosomal subunit protein bL17 (Bacteroides fragilis (strain ATCC 25285 / DSM 2151 / CCUG 4856 / JCM 11019 / LMG 10263 / NCTC 9343 / Onslow / VPI 2553 / EN-2)).